A 312-amino-acid chain; its full sequence is Zinc-finger homeodomain protein 4 (312 aa).

The disordered stretch occupies residues 20–74; it reads GGGGSHGHMIHHHDHHAANSAPPTHNNNNTTQPPPMPLHGNGHGNNYDHHHHQDP. Residues 37–50 are compositionally biased toward low complexity; sequence ANSAPPTHNNNNTT. The segment at 90–139 adopts a ZF-HD dimerization-type; degenerate zinc-finger fold; the sequence is YKECLKNHAAAMGGNATDGCGEFMPSGEDGSIEALTCSACNCHRNFHRKE. A DNA-binding region (homeobox) is located at residues 218 to 281; that stretch reads KKRFRTKFTP…NNKIHFSKKN (64 aa).

Homo- and heterodimer with other ZFHD proteins. Interacts with ZHD1, ZHD2, ZHD5, ZHD7, ZHD8, ZHD10 and ZHD11. In terms of tissue distribution, mostly expressed in flowers and inflorescence.

The protein resides in the nucleus. Its function is as follows. Putative transcription factor. Probably involved in the regulation of floral induction. The protein is Zinc-finger homeodomain protein 4 (ZHD4) of Arabidopsis thaliana (Mouse-ear cress).